A 173-amino-acid chain; its full sequence is Small ribosomal subunit protein uS5 (173 aa).

The S5 DRBM domain occupies 17–80 (WQERVIQIRR…ADGKKQLIEV (64 aa)).

Belongs to the universal ribosomal protein uS5 family. Part of the 30S ribosomal subunit. Contacts proteins S4 and S8.

In terms of biological role, with S4 and S12 plays an important role in translational accuracy. Functionally, located at the back of the 30S subunit body where it stabilizes the conformation of the head with respect to the body. The chain is Small ribosomal subunit protein uS5 from Microcystis aeruginosa (strain NIES-843 / IAM M-2473).